The primary structure comprises 429 residues: Phosphomethylpyrimidine synthase (429 aa).

Substrate contacts are provided by residues N66, M95, Y124, H163, 185-187 (SRG), 226-229 (DGLR), and E265. H269 is a Zn(2+) binding site. Y292 provides a ligand contact to substrate. A Zn(2+)-binding site is contributed by H333. [4Fe-4S] cluster contacts are provided by C407, C410, and C414.

It belongs to the ThiC family. Requires [4Fe-4S] cluster as cofactor.

It catalyses the reaction 5-amino-1-(5-phospho-beta-D-ribosyl)imidazole + S-adenosyl-L-methionine = 4-amino-2-methyl-5-(phosphooxymethyl)pyrimidine + CO + 5'-deoxyadenosine + formate + L-methionine + 3 H(+). It participates in cofactor biosynthesis; thiamine diphosphate biosynthesis. Catalyzes the synthesis of the hydroxymethylpyrimidine phosphate (HMP-P) moiety of thiamine from aminoimidazole ribotide (AIR) in a radical S-adenosyl-L-methionine (SAM)-dependent reaction. The protein is Phosphomethylpyrimidine synthase of Pyrococcus abyssi (strain GE5 / Orsay).